The sequence spans 105 residues: Large ribosomal subunit protein uL24 (105 aa).

The protein belongs to the universal ribosomal protein uL24 family. As to quaternary structure, part of the 50S ribosomal subunit.

In terms of biological role, one of two assembly initiator proteins, it binds directly to the 5'-end of the 23S rRNA, where it nucleates assembly of the 50S subunit. Functionally, one of the proteins that surrounds the polypeptide exit tunnel on the outside of the subunit. This Methylobacillus flagellatus (strain ATCC 51484 / DSM 6875 / VKM B-1610 / KT) protein is Large ribosomal subunit protein uL24.